We begin with the raw amino-acid sequence, 348 residues long: Nicotinate-nucleotide--dimethylbenzimidazole phosphoribosyltransferase (348 aa).

Glutamate 316 functions as the Proton acceptor in the catalytic mechanism.

It belongs to the CobT family.

The catalysed reaction is 5,6-dimethylbenzimidazole + nicotinate beta-D-ribonucleotide = alpha-ribazole 5'-phosphate + nicotinate + H(+). The protein operates within nucleoside biosynthesis; alpha-ribazole biosynthesis; alpha-ribazole from 5,6-dimethylbenzimidazole: step 1/2. Catalyzes the synthesis of alpha-ribazole-5'-phosphate from nicotinate mononucleotide (NAMN) and 5,6-dimethylbenzimidazole (DMB). This is Nicotinate-nucleotide--dimethylbenzimidazole phosphoribosyltransferase from Xanthomonas axonopodis pv. citri (strain 306).